The sequence spans 65 residues: Photosystem II reaction center protein J (65 aa).

The segment covering 1–17 (MSTKLKGPDGRIPDRLP) has biased composition (basic and acidic residues). The segment at 1–21 (MSTKLKGPDGRIPDRLPDGSP) is disordered. A helical transmembrane segment spans residues 36-56 (LWLVATVGGMAVLSVLGLFFF).

The protein belongs to the PsbJ family. In terms of assembly, PSII is composed of 1 copy each of membrane proteins PsbA, PsbB, PsbC, PsbD, PsbE, PsbF, PsbH, PsbI, PsbJ, PsbK, PsbL, PsbM, PsbT, PsbX, PsbY, Psb30/Ycf12, peripheral proteins PsbO, CyanoQ (PsbQ), PsbU, PsbV and a large number of cofactors. It forms dimeric complexes.

Its subcellular location is the cellular thylakoid membrane. In terms of biological role, one of the components of the core complex of photosystem II (PSII). PSII is a light-driven water:plastoquinone oxidoreductase that uses light energy to abstract electrons from H(2)O, generating O(2) and a proton gradient subsequently used for ATP formation. It consists of a core antenna complex that captures photons, and an electron transfer chain that converts photonic excitation into a charge separation. This chain is Photosystem II reaction center protein J, found in Prochlorococcus marinus (strain MIT 9313).